A 306-amino-acid polypeptide reads, in one-letter code: uncharacterized protein (306 aa).

9 consecutive transmembrane segments (helical) span residues V6–I26, H37–T57, I67–I87, T91–L111, W125–F145, S148–F168, G177–L197, L213–V233, and A251–L271. EamA domains lie at G17–F140 and F160–L285.

The protein belongs to the EamA transporter family.

It is found in the cell membrane. This is an uncharacterized protein from Bacillus subtilis (strain 168).